The sequence spans 241 residues: Pyridoxine 5'-phosphate synthase (241 aa).

Asn-7 is a 3-amino-2-oxopropyl phosphate binding site. 9-10 (DH) lines the 1-deoxy-D-xylulose 5-phosphate pocket. 3-amino-2-oxopropyl phosphate is bound at residue Arg-18. His-43 serves as the catalytic Proton acceptor. 1-deoxy-D-xylulose 5-phosphate is bound by residues Arg-45 and His-50. Glu-70 (proton acceptor) is an active-site residue. A 1-deoxy-D-xylulose 5-phosphate-binding site is contributed by Thr-100. Catalysis depends on His-191, which acts as the Proton donor. 3-amino-2-oxopropyl phosphate contacts are provided by residues Gly-192 and 213-214 (GH).

This sequence belongs to the PNP synthase family. In terms of assembly, homooctamer; tetramer of dimers.

Its subcellular location is the cytoplasm. The enzyme catalyses 3-amino-2-oxopropyl phosphate + 1-deoxy-D-xylulose 5-phosphate = pyridoxine 5'-phosphate + phosphate + 2 H2O + H(+). It participates in cofactor biosynthesis; pyridoxine 5'-phosphate biosynthesis; pyridoxine 5'-phosphate from D-erythrose 4-phosphate: step 5/5. Catalyzes the complicated ring closure reaction between the two acyclic compounds 1-deoxy-D-xylulose-5-phosphate (DXP) and 3-amino-2-oxopropyl phosphate (1-amino-acetone-3-phosphate or AAP) to form pyridoxine 5'-phosphate (PNP) and inorganic phosphate. This is Pyridoxine 5'-phosphate synthase from Nitratidesulfovibrio vulgaris (strain ATCC 29579 / DSM 644 / CCUG 34227 / NCIMB 8303 / VKM B-1760 / Hildenborough) (Desulfovibrio vulgaris).